The sequence spans 513 residues: Ankyrin repeat domain-containing protein 13C-B (513 aa).

Positions 1 to 19 (MTGEKIRSLHRDQKPSKDE) are enriched in basic and acidic residues. 2 disordered regions span residues 1-34 (MTGEKIRSLHRDQKPSKDEDLLEPDEEATADGTF) and 55-77 (PSNPALLQNHHHHHQQQISPMTP). Acidic residues predominate over residues 20-29 (DLLEPDEEAT). 3 ANK repeats span residues 83–114 (DVYFPVHECVIKGDIRKLSSLIRSHNIGQKDN), 115–144 (HGNTPLHLAVMLGNKECAHLLLAHNAPVKV), and 148–177 (QGWSPLAEAISYGDRQMITALLRKLKQQSR).

It localises to the endoplasmic reticulum membrane. In terms of biological role, acts as a molecular chaperone for G protein-coupled receptors, regulating their biogenesis and exit from the ER. The sequence is that of Ankyrin repeat domain-containing protein 13C-B (ankrd13c-b) from Xenopus laevis (African clawed frog).